The chain runs to 371 residues: Ferrochelatase (371 aa).

Fe cation-binding residues include His218 and Glu299.

This sequence belongs to the ferrochelatase family.

It localises to the cytoplasm. It carries out the reaction heme b + 2 H(+) = protoporphyrin IX + Fe(2+). The protein operates within porphyrin-containing compound metabolism; protoheme biosynthesis; protoheme from protoporphyrin-IX: step 1/1. Functionally, catalyzes the ferrous insertion into protoporphyrin IX. The protein is Ferrochelatase of Cupriavidus taiwanensis (strain DSM 17343 / BCRC 17206 / CCUG 44338 / CIP 107171 / LMG 19424 / R1) (Ralstonia taiwanensis (strain LMG 19424)).